Reading from the N-terminus, the 501-residue chain is ATP synthase subunit alpha (501 aa).

Residue 169 to 176 (GDRQTGKT) participates in ATP binding.

The protein belongs to the ATPase alpha/beta chains family. In terms of assembly, F-type ATPases have 2 components, CF(1) - the catalytic core - and CF(0) - the membrane proton channel. CF(1) has five subunits: alpha(3), beta(3), gamma(1), delta(1), epsilon(1). CF(0) has three main subunits: a(1), b(2) and c(9-12). The alpha and beta chains form an alternating ring which encloses part of the gamma chain. CF(1) is attached to CF(0) by a central stalk formed by the gamma and epsilon chains, while a peripheral stalk is formed by the delta and b chains.

It localises to the cell inner membrane. It catalyses the reaction ATP + H2O + 4 H(+)(in) = ADP + phosphate + 5 H(+)(out). In terms of biological role, produces ATP from ADP in the presence of a proton gradient across the membrane. The alpha chain is a regulatory subunit. The polypeptide is ATP synthase subunit alpha (Campylobacter jejuni subsp. jejuni serotype O:23/36 (strain 81-176)).